The sequence spans 223 residues: Ribose-5-phosphate isomerase A (223 aa).

Residues 32-35, 85-88, and 98-101 contribute to the substrate site; these read TGST, DGAD, and KGGG. The active-site Proton acceptor is Glu107. Lys125 contributes to the substrate binding site.

The protein belongs to the ribose 5-phosphate isomerase family. As to quaternary structure, homodimer.

The catalysed reaction is aldehydo-D-ribose 5-phosphate = D-ribulose 5-phosphate. Its pathway is carbohydrate degradation; pentose phosphate pathway; D-ribose 5-phosphate from D-ribulose 5-phosphate (non-oxidative stage): step 1/1. Catalyzes the reversible conversion of ribose-5-phosphate to ribulose 5-phosphate. The sequence is that of Ribose-5-phosphate isomerase A from Pseudomonas fluorescens (strain ATCC BAA-477 / NRRL B-23932 / Pf-5).